A 353-amino-acid chain; its full sequence is MPPPQRFRVQSKNYFLTYPRCTIPKEEALSQLQKIHTTTNKKFIKVCEERHDNGEPHLHALIQFEGKFICTNKRLFDLVSTTRSAHFHPNIQGAKSSSDVKEYIDKDGVTIEWGQFQVDGRSARGGQQSANDSYAKALNADSIESALTILKEEQPKDYVLQNHNIRSNLERIFFKVPEPWVPPFPLSSFVNIPVVMQDWVDDYFGRGSAARPERPISIIVEGDSRTGKTMWARALGPHNYLSGHLDFNSLVYSNSVEYNVIDDITPNYLKLKDWKELIGEQKDWQSNCKYGKPVQIKGGIPSIVLCNPGEGSSYKDFLNKEEKPALHNWTIHNAIFVTLTAPLYQSTAQDCQT.

Residues 8 to 116 (RVQSKNYFLT…DGVTIEWGQF (109 aa)) enclose the CRESS-DNA virus Rep endonuclease domain. Positions 15 to 18 (FLTY) match the RCR-1 motif. Glutamate 49, histidine 57, and histidine 59 together coordinate a divalent metal cation. Positions 57–59 (HLH) match the RCR-2 motif. Tyrosine 103 functions as the For DNA cleavage activity in the catalytic mechanism. Residues 103 to 106 (YIDK) carry the RCR-3 motif. Aspartate 107 contacts a divalent metal cation. Residues 143–153 (IESALTILKEE) are binding to RBR1. The interval 156-176 (KDYVLQNHNIRSNLERIFFKV) is oligomerization. ATP is bound at residue 222–229 (GDSRTGKT).

This sequence belongs to the geminiviridae Rep protein family. Homooligomer. Interacts with the replication enhancer protein (REn). Interacts with host retinoblastoma-related protein 1 (RBR1), and may thereby induce the transcription of host replicative enzymes even if the cell is not dividing anymore. Interacts with host PCNA. Interacts with host SCE1 protein. Mg(2+) is required as a cofactor. Requires Mn(2+) as cofactor.

The protein localises to the host nucleus. Its function is as follows. Essential for the replication of viral ssDNA. The closed circular ssDNA genome is first converted to a superhelical dsDNA. Rep binds a specific region at the genome origin of replication. It introduces an endonucleolytic nick within the conserved sequence 5'-TAATATTAC-3' in the intergenic region of the genome present in all geminiviruses, thereby initiating the rolling circle replication (RCR). Following cleavage, binds covalently to the 5'-phosphate of DNA as a tyrosyl ester. The cleavage gives rise to a free 3'-OH that serves as a primer for the cellular DNA polymerase. The polymerase synthesizes the (+) strand DNA by rolling circle mechanism. After one round of replication, a Rep-catalyzed nucleotidyl transfer reaction releases a circular single-stranded virus genome, thereby terminating the replication. Displays origin-specific DNA cleavage, nucleotidyl transferase, ATPase and helicase activities. The sequence is that of Replication-associated protein from Macroptilium lathyroides (Lima bean).